Consider the following 513-residue polypeptide: Zinc finger protein 395 (513 aa).

Low complexity predominate over residues 17 to 29; sequence ARVLGPSASEGPS. The disordered stretch occupies residues 17 to 56; that stretch reads ARVLGPSASEGPSAAPPSEPLLEGAAPQPFTTSDDTPCQE. Residues 45–55 are compositionally biased toward polar residues; sequence PFTTSDDTPCQ. Positions 165-174 match the Nuclear export signal motif; sequence MDEMMAAMVL. The segment at 204 to 269 is disordered; that stretch reads KESGDISDSG…DPFLLDEPAP (66 aa). The segment covering 209–229 has biased composition (low complexity); that stretch reads ISDSGSSTTSGHWSGSSGVST. At serine 248 the chain carries Phosphoserine. Residues 280–305 form a C2H2-type zinc finger; it reads YKCLWPNCGKVLRSIVGIKRHVKALH. A disordered region spans residues 335–394; sequence AAAAAAAGTPVPGTPTSEPAPTPSMTGLPLSALPPPLHKAQSSGPEHPGPESSLPSGALS. The span at 348 to 359 shows a compositional bias: polar residues; it reads TPTSEPAPTPSM. Serine 376 and serine 449 each carry phosphoserine. Residues 376 to 391 show a composition bias toward low complexity; that stretch reads SSGPEHPGPESSLPSG.

As to quaternary structure, interacts with repression-mediating E2 binding site P2 of human papillomavirus type 8 (HPV8). As to expression, widely expressed.

The protein resides in the cytoplasm. Its subcellular location is the nucleus. Functionally, plays a role in papillomavirus genes transcription. The chain is Zinc finger protein 395 (ZNF395) from Homo sapiens (Human).